A 136-amino-acid polypeptide reads, in one-letter code: UPF0213 protein AHA_3736 (136 aa).

In terms of domain architecture, GIY-YIG spans 17 to 92; that stretch reads SHWFIYMVRT…KQQSKAFKEQ (76 aa). Residues 114–136 form a disordered region; the sequence is QKRPRYAAAKEGSDNRECQRQVD. Over residues 124–136 the composition is skewed to basic and acidic residues; that stretch reads EGSDNRECQRQVD.

This sequence belongs to the UPF0213 family.

The protein is UPF0213 protein AHA_3736 of Aeromonas hydrophila subsp. hydrophila (strain ATCC 7966 / DSM 30187 / BCRC 13018 / CCUG 14551 / JCM 1027 / KCTC 2358 / NCIMB 9240 / NCTC 8049).